The following is a 745-amino-acid chain: Cytoskeleton-associated protein 2-like (745 aa).

Disordered stretches follow at residues 26–305 (KGKL…VNRV), 319–362 (PATE…LGPQ), 422–483 (FPPQ…TYKR), and 608–638 (EAVT…PCPS). Polar residues-rich tracts occupy residues 67-89 (SKTT…ASQK) and 101-136 (GLTS…SRNP). The KEN box signature appears at 183 to 185 (KEN). Residues 192–202 (KPEKPDPELHS) are compositionally biased toward basic and acidic residues. K195 is covalently cross-linked (Glycyl lysine isopeptide (Lys-Gly) (interchain with G-Cter in SUMO1); alternate). K195 participates in a covalent cross-link: Glycyl lysine isopeptide (Lys-Gly) (interchain with G-Cter in SUMO2); alternate. 4 stretches are compositionally biased toward polar residues: residues 205-216 (KPNTGSSNQTQK), 224-233 (LSKSSVTQTA), 242-253 (FIRNTQIRTQAV), and 284-301 (NKTQ…QDIT). Residues 427 to 442 (HFLNKTAPRTQASTAA) are compositionally biased toward polar residues. Over residues 459–475 (KKPEGEDRRKQLEEWQK) the composition is skewed to basic and acidic residues. Polar residues predominate over residues 608–624 (EAVTSDTSAAGTNTTSA). S745 carries the phosphoserine modification.

The protein belongs to the CKAP2 family. In terms of processing, ubiquitinated by the anaphase promoting complex/cyclosome (APC/C). In terms of tissue distribution, highly expressed in regions of active neurogenesis and neural stem/progenitor cells (NSPCs), both embryonic and adult, not detected in lung, liver, kidney, heart, and skeletal muscle.

It is found in the cytoplasm. It localises to the cytoskeleton. The protein resides in the spindle pole. Microtubule-associated protein required for mitotic spindle formation and cell-cycle progression in neural progenitor cells. This is Cytoskeleton-associated protein 2-like (Ckap2l) from Mus musculus (Mouse).